Reading from the N-terminus, the 305-residue chain is Zinc transporter ZIP9 (305 aa).

Residues 7–27 (ICLLSLAMLVACYVAGIIPLA) traverse the membrane as a helical segment. N29 is a glycosylation site (N-linked (GlcNAc...) asparagine). 5 helical membrane-spanning segments follow: residues 35–55 (LKLV…AVIV), 104–124 (AYIG…DQIG), 144–164 (ITTT…LGAA), 174–194 (LIVF…LVSF), and 208–228 (HLLV…LGLS). N239 carries an N-linked (GlcNAc...) asparagine glycan. A run of 2 helical transmembrane segments spans residues 242–262 (GVAM…HVLP) and 284–304 (LEVA…IGHH).

It belongs to the ZIP transporter (TC 2.A.5) family.

The protein resides in the golgi apparatus. It is found in the trans-Golgi network membrane. It localises to the cell membrane. Its subcellular location is the cytoplasm. The protein localises to the perinuclear region. The protein resides in the mitochondrion. It is found in the nucleus. The catalysed reaction is Zn(2+)(in) = Zn(2+)(out). In terms of biological role, transports zinc ions across cell and organelle membranes into the cytoplasm and regulates intracellular zinc homeostasis. Participates in the zinc ions efflux out of the secretory compartments. Regulates intracellular zinc level, resulting in the enhancement of AKT1 and MAPK3/MAPK1 (Erk1/2) phosphorylation in response to the BCR activation. Also functions as a membrane androgen receptor that mediates, through a G protein, the non-classical androgen signaling pathway, characterized by the activation of MAPK3/MAPK1 (Erk1/2) and transcription factors CREB1 or ATF1. Moreover, has dual functions as a membrane-bound androgen receptor and as an androgen-dependent zinc transporter both of which are mediated through an inhibitory G protein (Gi) that mediates both MAP kinase and zinc signaling leading to the androgen-dependent apoptotic process. The protein is Zinc transporter ZIP9 of Gallus gallus (Chicken).